A 135-amino-acid polypeptide reads, in one-letter code: Ribosome-binding factor A (135 aa).

Belongs to the RbfA family. As to quaternary structure, monomer. Binds 30S ribosomal subunits, but not 50S ribosomal subunits or 70S ribosomes.

It is found in the cytoplasm. Functionally, one of several proteins that assist in the late maturation steps of the functional core of the 30S ribosomal subunit. Associates with free 30S ribosomal subunits (but not with 30S subunits that are part of 70S ribosomes or polysomes). Required for efficient processing of 16S rRNA. May interact with the 5'-terminal helix region of 16S rRNA. In Aliivibrio fischeri (strain MJ11) (Vibrio fischeri), this protein is Ribosome-binding factor A.